A 335-amino-acid chain; its full sequence is Ornithine carbamoyltransferase (335 aa).

Carbamoyl phosphate contacts are provided by residues 56 to 59, Gln-83, Arg-107, and 134 to 137; these read STRT and HPTQ. L-ornithine is bound by residues Asn-168, Asp-232, and 236–237; that span reads SM. Carbamoyl phosphate-binding positions include 274 to 275 and Arg-320; that span reads CL.

Belongs to the aspartate/ornithine carbamoyltransferase superfamily. OTCase family.

It is found in the cytoplasm. It carries out the reaction carbamoyl phosphate + L-ornithine = L-citrulline + phosphate + H(+). Its pathway is amino-acid biosynthesis; L-arginine biosynthesis; L-arginine from L-ornithine and carbamoyl phosphate: step 1/3. In terms of biological role, reversibly catalyzes the transfer of the carbamoyl group from carbamoyl phosphate (CP) to the N(epsilon) atom of ornithine (ORN) to produce L-citrulline. The polypeptide is Ornithine carbamoyltransferase (Pectobacterium atrosepticum (strain SCRI 1043 / ATCC BAA-672) (Erwinia carotovora subsp. atroseptica)).